Consider the following 135-residue polypeptide: Putative nickel-responsive regulator (135 aa).

Ni(2+) contacts are provided by His-79, His-90, His-92, and Cys-98.

Belongs to the transcriptional regulatory CopG/NikR family. Requires Ni(2+) as cofactor.

Transcriptional regulator. The sequence is that of Putative nickel-responsive regulator from Dictyoglomus thermophilum (strain ATCC 35947 / DSM 3960 / H-6-12).